A 496-amino-acid chain; its full sequence is Cobyric acid synthase (496 aa).

Residues threonine 258–leucine 427 enclose the GATase cobBQ-type domain. The active-site Nucleophile is the cysteine 339. The active site involves histidine 419.

This sequence belongs to the CobB/CobQ family. CobQ subfamily.

The protein operates within cofactor biosynthesis; adenosylcobalamin biosynthesis. Functionally, catalyzes amidations at positions B, D, E, and G on adenosylcobyrinic A,C-diamide. NH(2) groups are provided by glutamine, and one molecule of ATP is hydrogenolyzed for each amidation. This Mycolicibacterium smegmatis (strain ATCC 700084 / mc(2)155) (Mycobacterium smegmatis) protein is Cobyric acid synthase.